Here is a 212-residue protein sequence, read N- to C-terminus: Thymidylate kinase (212 aa).

Residue 10–17 (GLEGAGKT) coordinates ATP.

Belongs to the thymidylate kinase family.

It catalyses the reaction dTMP + ATP = dTDP + ADP. Functionally, phosphorylation of dTMP to form dTDP in both de novo and salvage pathways of dTTP synthesis. This is Thymidylate kinase from Yersinia pseudotuberculosis serotype O:3 (strain YPIII).